The sequence spans 377 residues: Ribosomal RNA large subunit methyltransferase G (377 aa).

This sequence belongs to the methyltransferase superfamily. RlmG family.

It localises to the cytoplasm. The enzyme catalyses guanosine(1835) in 23S rRNA + S-adenosyl-L-methionine = N(2)-methylguanosine(1835) in 23S rRNA + S-adenosyl-L-homocysteine + H(+). In terms of biological role, specifically methylates the guanine in position 1835 (m2G1835) of 23S rRNA. This is Ribosomal RNA large subunit methyltransferase G from Shewanella sp. (strain MR-4).